The following is a 109-amino-acid chain: FK506-binding protein (109 aa).

Residues 20 to 108 form the PPIase FKBP-type domain; that stretch reads GKEITVHYTG…IFEVELLKVY (89 aa).

Belongs to the FKBP-type PPIase family.

It carries out the reaction [protein]-peptidylproline (omega=180) = [protein]-peptidylproline (omega=0). With respect to regulation, inhibited by FK506. PPIases accelerate the folding of proteins. The protein is FK506-binding protein (fbp) of Neisseria meningitidis serogroup A / serotype 4A (strain DSM 15465 / Z2491).